Here is a 262-residue protein sequence, read N- to C-terminus: Shikimate dehydrogenase (NADP(+)) (262 aa).

Shikimate is bound by residues 15–17 (SRS) and threonine 62. Catalysis depends on lysine 66, which acts as the Proton acceptor. Position 78 (glutamate 78) interacts with NADP(+). 2 residues coordinate shikimate: asparagine 87 and aspartate 102. Residues 126 to 130 (GAGGA), 150 to 155 (NRTQQR), and methionine 214 contribute to the NADP(+) site. Tyrosine 216 provides a ligand contact to shikimate. Glycine 236 provides a ligand contact to NADP(+).

Belongs to the shikimate dehydrogenase family. As to quaternary structure, homodimer.

It carries out the reaction shikimate + NADP(+) = 3-dehydroshikimate + NADPH + H(+). It functions in the pathway metabolic intermediate biosynthesis; chorismate biosynthesis; chorismate from D-erythrose 4-phosphate and phosphoenolpyruvate: step 4/7. Functionally, involved in the biosynthesis of the chorismate, which leads to the biosynthesis of aromatic amino acids. Catalyzes the reversible NADPH linked reduction of 3-dehydroshikimate (DHSA) to yield shikimate (SA). This chain is Shikimate dehydrogenase (NADP(+)), found in Acinetobacter baylyi (strain ATCC 33305 / BD413 / ADP1).